The chain runs to 121 residues: Large ribosomal subunit protein bL20 (121 aa).

This sequence belongs to the bacterial ribosomal protein bL20 family.

Its function is as follows. Binds directly to 23S ribosomal RNA and is necessary for the in vitro assembly process of the 50S ribosomal subunit. It is not involved in the protein synthesizing functions of that subunit. This Persephonella marina (strain DSM 14350 / EX-H1) protein is Large ribosomal subunit protein bL20.